The sequence spans 327 residues: GMP reductase (327 aa).

Cysteine 175 functions as the Thioimidate intermediate in the catalytic mechanism. NADP(+) is bound at residue 204 to 227 (IIADGGIRTPGDIAKSIRFGATMV).

Belongs to the IMPDH/GMPR family. GuaC type 2 subfamily.

The enzyme catalyses IMP + NH4(+) + NADP(+) = GMP + NADPH + 2 H(+). Its function is as follows. Catalyzes the irreversible NADPH-dependent deamination of GMP to IMP. It functions in the conversion of nucleobase, nucleoside and nucleotide derivatives of G to A nucleotides, and in maintaining the intracellular balance of A and G nucleotides. The chain is GMP reductase from Clostridium acetobutylicum (strain ATCC 824 / DSM 792 / JCM 1419 / IAM 19013 / LMG 5710 / NBRC 13948 / NRRL B-527 / VKM B-1787 / 2291 / W).